Here is a 211-residue protein sequence, read N- to C-terminus: FMN-dependent NADH:quinone oxidoreductase (211 aa).

Residues 17 to 19 and 102 to 105 contribute to the FMN site; these read SYS and MWNF.

The protein belongs to the azoreductase type 1 family. In terms of assembly, homodimer. It depends on FMN as a cofactor.

It carries out the reaction 2 a quinone + NADH + H(+) = 2 a 1,4-benzosemiquinone + NAD(+). The enzyme catalyses N,N-dimethyl-1,4-phenylenediamine + anthranilate + 2 NAD(+) = 2-(4-dimethylaminophenyl)diazenylbenzoate + 2 NADH + 2 H(+). In terms of biological role, quinone reductase that provides resistance to thiol-specific stress caused by electrophilic quinones. Its function is as follows. Also exhibits azoreductase activity. Catalyzes the reductive cleavage of the azo bond in aromatic azo compounds to the corresponding amines. The chain is FMN-dependent NADH:quinone oxidoreductase from Geobacillus kaustophilus (strain HTA426).